A 950-amino-acid chain; its full sequence is ABC transporter A family member 9 (950 aa).

The next 6 membrane-spanning stretches (helical) occupy residues 31–51, 223–243, 276–296, 308–328, 342–362, and 426–446; these read ATCL…SIEE, IISA…MFGF, WLIW…LFGM, FVLV…LAFA, VGFL…AGFP, and IWLV…DNII. The ABC transporter domain occupies 520-765; sequence VQIHGLAKTY…FGTGFVATVS (246 aa). 566 to 573 serves as a coordination point for ATP; it reads GPNGAGKT.

It belongs to the ABC transporter superfamily. ABCA family. CPR flippase (TC 3.A.1.211) subfamily. Highly expressed in siliques. Detected in seedlings, rosette leaves, stems and flowers.

Its subcellular location is the endoplasmic reticulum membrane. Mediates the transport of acyl-CoAs and/or free fatty acids to the endoplasmic reticulum. Has no effect on the selectivity of fatty acid incorporation into triacylglycerol or further desaturation steps. This is ABC transporter A family member 9 (ABCA9) from Arabidopsis thaliana (Mouse-ear cress).